The sequence spans 586 residues: Glutathione/L-cysteine transport system ATP-binding/permease protein CydD (586 aa).

The next 6 membrane-spanning stretches (helical) occupy residues 28-48 (IVLATLSSFILVAQTYFLATL), 62-82 (LIPYFLGLIIGFGMRAIILWA), 146-166 (LSAIVPVVIFIAVFPLNWAAG), 167-187 (LILMITAPLVPLFMIIVGIAA), 250-270 (SAVLEFFTSISIALMAVYFGF), and 278-298 (FGTYNAPLTLFTGFFCLILAP). An ABC transmembrane type-1 domain is found at 28–316 (IVLATLSSFI…LGTYYHDRAA (289 aa)). Positions 350 to 581 (ISAENLVVLS…GFFAELLAQR (232 aa)) constitute an ABC transporter domain. 383–390 (GQSGAGKT) is an ATP binding site.

Belongs to the ABC transporter superfamily. Cysteine exporter (TC 3.A.1.129.1) family. In terms of assembly, forms a heterodimer with CydC.

It is found in the cell inner membrane. It carries out the reaction L-cysteine(in) + ATP + H2O = L-cysteine(out) + ADP + phosphate + H(+). It catalyses the reaction glutathione(in) + ATP + H2O = glutathione(out) + ADP + phosphate + H(+). In terms of biological role, part of the ABC transporter complex CydDC that exports the reduced low-molecular-weight thiols cysteine and glutathione to the periplasm. Export of these thiol-containing redox-active molecules may be crucial for redox homeostasis in the periplasm, permitting correct assembly of various respiratory complexes and formation of correct disulfide bonds in periplasmic and secreted proteins. CydD contains transmembrane domains (TMD), which form a pore in the inner membrane, and an ATP-binding domain (NBD), which is responsible for energy generation. Required for the assembly of functional cytochrome bd-type quinol oxidases and periplasmic c-type cytochromes. The polypeptide is Glutathione/L-cysteine transport system ATP-binding/permease protein CydD (cydD) (Haemophilus influenzae (strain ATCC 51907 / DSM 11121 / KW20 / Rd)).